The sequence spans 554 residues: Dihydroxy-acid dehydratase (554 aa).

Residue aspartate 78 participates in Mg(2+) binding. Cysteine 119 is a [2Fe-2S] cluster binding site. 2 residues coordinate Mg(2+): aspartate 120 and lysine 121. An N6-carboxylysine modification is found at lysine 121. Position 191 (cysteine 191) interacts with [2Fe-2S] cluster. Glutamate 442 serves as a coordination point for Mg(2+). Serine 468 serves as the catalytic Proton acceptor.

Belongs to the IlvD/Edd family. As to quaternary structure, homodimer. [2Fe-2S] cluster is required as a cofactor. Requires Mg(2+) as cofactor.

It carries out the reaction (2R)-2,3-dihydroxy-3-methylbutanoate = 3-methyl-2-oxobutanoate + H2O. The catalysed reaction is (2R,3R)-2,3-dihydroxy-3-methylpentanoate = (S)-3-methyl-2-oxopentanoate + H2O. The protein operates within amino-acid biosynthesis; L-isoleucine biosynthesis; L-isoleucine from 2-oxobutanoate: step 3/4. Its pathway is amino-acid biosynthesis; L-valine biosynthesis; L-valine from pyruvate: step 3/4. In terms of biological role, functions in the biosynthesis of branched-chain amino acids. Catalyzes the dehydration of (2R,3R)-2,3-dihydroxy-3-methylpentanoate (2,3-dihydroxy-3-methylvalerate) into 2-oxo-3-methylpentanoate (2-oxo-3-methylvalerate) and of (2R)-2,3-dihydroxy-3-methylbutanoate (2,3-dihydroxyisovalerate) into 2-oxo-3-methylbutanoate (2-oxoisovalerate), the penultimate precursor to L-isoleucine and L-valine, respectively. The chain is Dihydroxy-acid dehydratase from Thermotoga petrophila (strain ATCC BAA-488 / DSM 13995 / JCM 10881 / RKU-1).